Consider the following 258-residue polypeptide: Cytochrome c oxidase subunit 2 (258 aa).

At 1-41 the chain is on the mitochondrial intermembrane side; sequence MIVNECLFFTIALCDAAEPWQLGFQDAATPMMQGIIDLHHD. A helical transmembrane segment spans residues 42–58; sequence ILFFLILILVFVLWILV. Topologically, residues 59–82 are mitochondrial matrix; the sequence is RALWHFYYKKNPIPQRIVHGTTIE. Residues 83–104 traverse the membrane as a helical segment; it reads ILWTIFPSIILMFIAIPSFALL. Residues 105-258 lie on the Mitochondrial intermembrane side of the membrane; the sequence is YSMDEVVVDP…VSNLFIPPTS (154 aa). Cu cation-binding residues include His-187, Cys-222, Glu-224, Cys-226, His-230, and Met-233. Residue Glu-224 coordinates Mg(2+).

Belongs to the cytochrome c oxidase subunit 2 family. Component of the cytochrome c oxidase (complex IV, CIV), a multisubunit enzyme composed of a catalytic core of 3 subunits and several supernumerary subunits. The complex exists as a monomer or a dimer and forms supercomplexes (SCs) in the inner mitochondrial membrane with ubiquinol-cytochrome c oxidoreductase (cytochrome b-c1 complex, complex III, CIII). The cofactor is Cu cation.

It localises to the mitochondrion inner membrane. It catalyses the reaction 4 Fe(II)-[cytochrome c] + O2 + 8 H(+)(in) = 4 Fe(III)-[cytochrome c] + 2 H2O + 4 H(+)(out). Component of the cytochrome c oxidase, the last enzyme in the mitochondrial electron transport chain which drives oxidative phosphorylation. The respiratory chain contains 3 multisubunit complexes succinate dehydrogenase (complex II, CII), ubiquinol-cytochrome c oxidoreductase (cytochrome b-c1 complex, complex III, CIII) and cytochrome c oxidase (complex IV, CIV), that cooperate to transfer electrons derived from NADH and succinate to molecular oxygen, creating an electrochemical gradient over the inner membrane that drives transmembrane transport and the ATP synthase. Cytochrome c oxidase is the component of the respiratory chain that catalyzes the reduction of oxygen to water. Electrons originating from reduced cytochrome c in the intermembrane space (IMS) are transferred via the dinuclear copper A center (CU(A)) of subunit 2 and heme A of subunit 1 to the active site in subunit 1, a binuclear center (BNC) formed by heme A3 and copper B (CU(B)). The BNC reduces molecular oxygen to 2 water molecules using 4 electrons from cytochrome c in the IMS and 4 protons from the mitochondrial matrix. This Oenothera berteroana (Bertero's evening primrose) protein is Cytochrome c oxidase subunit 2 (COX2).